A 420-amino-acid polypeptide reads, in one-letter code: Probable ABC transporter-binding protein DR_1438 (420 aa).

The N-terminal stretch at M1–T24 is a signal peptide.

It belongs to the bacterial solute-binding protein 1 family.

Its function is as follows. Probably part of a binding-protein-dependent transport system. The chain is Probable ABC transporter-binding protein DR_1438 from Deinococcus radiodurans (strain ATCC 13939 / DSM 20539 / JCM 16871 / CCUG 27074 / LMG 4051 / NBRC 15346 / NCIMB 9279 / VKM B-1422 / R1).